The sequence spans 272 residues: Dermonecrotic toxin LvSicTox-alphaIC1bv (272 aa).

Histidine 5 is a catalytic residue. Mg(2+)-binding residues include glutamate 25 and aspartate 27. Histidine 41 serves as the catalytic Nucleophile. Intrachain disulfides connect cysteine 45–cysteine 51 and cysteine 47–cysteine 189. Aspartate 84 contacts Mg(2+).

The protein belongs to the arthropod phospholipase D family. Class II subfamily. Mg(2+) serves as cofactor. Expressed by the venom gland.

The protein resides in the secreted. The enzyme catalyses an N-(acyl)-sphingosylphosphocholine = an N-(acyl)-sphingosyl-1,3-cyclic phosphate + choline. It carries out the reaction an N-(acyl)-sphingosylphosphoethanolamine = an N-(acyl)-sphingosyl-1,3-cyclic phosphate + ethanolamine. It catalyses the reaction a 1-acyl-sn-glycero-3-phosphocholine = a 1-acyl-sn-glycero-2,3-cyclic phosphate + choline. The catalysed reaction is a 1-acyl-sn-glycero-3-phosphoethanolamine = a 1-acyl-sn-glycero-2,3-cyclic phosphate + ethanolamine. Functionally, dermonecrotic toxins cleave the phosphodiester linkage between the phosphate and headgroup of certain phospholipids (sphingolipid and lysolipid substrates), forming an alcohol (often choline) and a cyclic phosphate. This toxin acts on sphingomyelin (SM). It may also act on ceramide phosphoethanolamine (CPE), lysophosphatidylcholine (LPC) and lysophosphatidylethanolamine (LPE), but not on lysophosphatidylserine (LPS), and lysophosphatidylglycerol (LPG). It acts by transphosphatidylation, releasing exclusively cyclic phosphate products as second products. Induces dermonecrosis, hemolysis, increased vascular permeability, edema, inflammatory response, and platelet aggregation. This Loxosceles variegata (Recluse spider) protein is Dermonecrotic toxin LvSicTox-alphaIC1bv.